A 263-amino-acid chain; its full sequence is Proteasome subunit beta type-5 (263 aa).

Positions 1-59 (MALASVLERPLPVNQRGFFGLGGRADLLDLGPGSLSDGLSLAAPGWGVPEEPGIEMLHG) are cleaved as a propeptide — removed in mature form. Thr-60 acts as the Nucleophile in catalysis. Residue Ala-108 coordinates bortezomib.

The protein belongs to the peptidase T1B family. In terms of assembly, the 26S proteasome consists of a 20S proteasome core and two 19S regulatory subunits. The 20S proteasome core is a barrel-shaped complex made of 28 subunits that are arranged in four stacked rings. The two outer rings are each formed by seven alpha subunits, and the two inner rings are formed by seven beta subunits. The proteolytic activity is exerted by three beta-subunits PSMB5, PSMB6 and PSMB7. Directly interacts with POMP. Interacts with ABCB1 and TAP1. As to quaternary structure, (Microbial infection) Interacts with HIV-1 TAT protein.

It localises to the cytoplasm. It is found in the nucleus. The catalysed reaction is Cleavage of peptide bonds with very broad specificity.. In terms of biological role, component of the 20S core proteasome complex involved in the proteolytic degradation of most intracellular proteins. This complex plays numerous essential roles within the cell by associating with different regulatory particles. Associated with two 19S regulatory particles, forms the 26S proteasome and thus participates in the ATP-dependent degradation of ubiquitinated proteins. The 26S proteasome plays a key role in the maintenance of protein homeostasis by removing misfolded or damaged proteins that could impair cellular functions, and by removing proteins whose functions are no longer required. Associated with the PA200 or PA28, the 20S proteasome mediates ubiquitin-independent protein degradation. This type of proteolysis is required in several pathways including spermatogenesis (20S-PA200 complex) or generation of a subset of MHC class I-presented antigenic peptides (20S-PA28 complex). Within the 20S core complex, PSMB5 displays a chymotrypsin-like activity. This is Proteasome subunit beta type-5 from Homo sapiens (Human).